Reading from the N-terminus, the 114-residue chain is UPF0757 protein YmgG (114 aa).

This sequence belongs to the UPF0757 family.

In Edwardsiella ictaluri (strain 93-146), this protein is UPF0757 protein YmgG.